The chain runs to 109 residues: U3-lycotoxin-Ls1x (109 aa).

A signal peptide spans 1–20 (MKFVLLFGVLLVTLFSYSSA). Residues 21 to 44 (EMLDDFDQADEDELLSLIEKEEAR) constitute a propeptide that is removed on maturation. Disulfide bonds link Cys48/Cys63, Cys55/Cys72, Cys62/Cys88, and Cys74/Cys86.

This sequence belongs to the neurotoxin 19 (CSTX) family. 01 subfamily. As to expression, expressed by the venom gland.

The protein resides in the secreted. The protein is U3-lycotoxin-Ls1x of Lycosa singoriensis (Wolf spider).